A 143-amino-acid chain; its full sequence is uncharacterized protein (143 aa).

A disordered region spans residues 1–37 (MSAPASSSAIAPSQPTAPGHARHSASWSASASDPSGA).

It belongs to the dynein light chain Tctex-type family.

This is an uncharacterized protein from Mycosarcoma maydis (Corn smut fungus).